A 253-amino-acid polypeptide reads, in one-letter code: Imidazole glycerol phosphate synthase subunit HisF (253 aa).

Residues Asp-11 and Asp-130 contribute to the active site.

This sequence belongs to the HisA/HisF family. In terms of assembly, heterodimer of HisH and HisF.

The protein localises to the cytoplasm. It carries out the reaction 5-[(5-phospho-1-deoxy-D-ribulos-1-ylimino)methylamino]-1-(5-phospho-beta-D-ribosyl)imidazole-4-carboxamide + L-glutamine = D-erythro-1-(imidazol-4-yl)glycerol 3-phosphate + 5-amino-1-(5-phospho-beta-D-ribosyl)imidazole-4-carboxamide + L-glutamate + H(+). The protein operates within amino-acid biosynthesis; L-histidine biosynthesis; L-histidine from 5-phospho-alpha-D-ribose 1-diphosphate: step 5/9. Functionally, IGPS catalyzes the conversion of PRFAR and glutamine to IGP, AICAR and glutamate. The HisF subunit catalyzes the cyclization activity that produces IGP and AICAR from PRFAR using the ammonia provided by the HisH subunit. The sequence is that of Imidazole glycerol phosphate synthase subunit HisF from Desulfitobacterium hafniense (strain DSM 10664 / DCB-2).